The following is a 281-amino-acid chain: S-methyl-5'-thioadenosine phosphorylase (281 aa).

Phosphate-binding positions include Ser-15, 58 to 59, and 91 to 92; these read RH and TA. Substrate is bound at residue Met-194. Residue Thr-195 participates in phosphate binding. 218 to 220 is a binding site for substrate; that stretch reads DYD.

The protein belongs to the PNP/MTAP phosphorylase family. MTAP subfamily. In terms of assembly, homotrimer.

It localises to the cytoplasm. It is found in the nucleus. The catalysed reaction is S-methyl-5'-thioadenosine + phosphate = 5-(methylsulfanyl)-alpha-D-ribose 1-phosphate + adenine. The protein operates within amino-acid biosynthesis; L-methionine biosynthesis via salvage pathway; S-methyl-5-thio-alpha-D-ribose 1-phosphate from S-methyl-5'-thioadenosine (phosphorylase route): step 1/1. Its function is as follows. Catalyzes the reversible phosphorylation of S-methyl-5'-thioadenosine (MTA) to adenine and 5-methylthioribose-1-phosphate. Involved in the breakdown of MTA, a major by-product of polyamine biosynthesis. Responsible for the first step in the methionine salvage pathway after MTA has been generated from S-adenosylmethionine. Has broad substrate specificity with 6-aminopurine nucleosides as preferred substrates. The protein is S-methyl-5'-thioadenosine phosphorylase (mtap) of Xenopus tropicalis (Western clawed frog).